We begin with the raw amino-acid sequence, 300 residues long: Acetylglutamate kinase (300 aa).

Residues 73 to 74 (GG), R95, and N197 each bind substrate.

This sequence belongs to the acetylglutamate kinase family. ArgB subfamily.

It is found in the cytoplasm. It catalyses the reaction N-acetyl-L-glutamate + ATP = N-acetyl-L-glutamyl 5-phosphate + ADP. It functions in the pathway amino-acid biosynthesis; L-arginine biosynthesis; N(2)-acetyl-L-ornithine from L-glutamate: step 2/4. Its function is as follows. Catalyzes the ATP-dependent phosphorylation of N-acetyl-L-glutamate. The chain is Acetylglutamate kinase from Bordetella parapertussis (strain 12822 / ATCC BAA-587 / NCTC 13253).